The primary structure comprises 600 residues: CDK5RAP1-like protein (600 aa).

The segment at L45 to R66 is disordered. The region spanning G93–Y222 is the MTTase N-terminal domain. C102, C139, C185, C260, C264, and C267 together coordinate [4Fe-4S] cluster. One can recognise a Radical SAM core domain in the interval S246–K501. One can recognise a TRAM domain in the interval D504 to A580.

The protein belongs to the methylthiotransferase family. MiaB subfamily. It depends on [4Fe-4S] cluster as a cofactor.

In terms of biological role, potential regulator of CDK5 activity. In Oryza sativa subsp. japonica (Rice), this protein is CDK5RAP1-like protein.